We begin with the raw amino-acid sequence, 429 residues long: Phosphomethylpyrimidine synthase (429 aa).

Substrate-binding positions include Asn-66, Met-95, Tyr-124, His-163, 185–187 (SRG), 226–229 (DAMR), and Glu-265. Residue His-269 coordinates Zn(2+). Tyr-292 contacts substrate. His-333 is a binding site for Zn(2+). [4Fe-4S] cluster is bound by residues Cys-409, Cys-412, and Cys-416.

It belongs to the ThiC family. [4Fe-4S] cluster serves as cofactor.

The catalysed reaction is 5-amino-1-(5-phospho-beta-D-ribosyl)imidazole + S-adenosyl-L-methionine = 4-amino-2-methyl-5-(phosphooxymethyl)pyrimidine + CO + 5'-deoxyadenosine + formate + L-methionine + 3 H(+). The protein operates within cofactor biosynthesis; thiamine diphosphate biosynthesis. In terms of biological role, catalyzes the synthesis of the hydroxymethylpyrimidine phosphate (HMP-P) moiety of thiamine from aminoimidazole ribotide (AIR) in a radical S-adenosyl-L-methionine (SAM)-dependent reaction. The sequence is that of Phosphomethylpyrimidine synthase from Methanopyrus kandleri (strain AV19 / DSM 6324 / JCM 9639 / NBRC 100938).